The following is a 1134-amino-acid chain: MWSLLLLAALVGQGFALKNVFDMRIQCPHSANFGETSVSGYTELPPLSLQEAEQLVPESSCNMDNHQSLSTINKLTKVVWRKKANQESANQNSFEVVESEVSFKGLCMLKHRMVEESYRNRRSVICYDLACNSTFCKPTVYMIVPKHACNMMKSCLIGLVPYRIQVVYERTYCTTGILTEGKCFVPDKAVVSALKRGMYAIASIETICFFIHQKGNTYKIVTAITSAMGSKCNNTDTKVQGYYICIIGGNSAPVYAPAGEDFRAMEVFSGIITSPHGEDHDLPAEEIATYQISGQIEAKIPHTVSSKNLKLIAFAGIPSYSSTSILAASEDGRFIFSPGLFPNLNQSVCDNNALPLIWRGLIDLTGYYEAVHPCNVFCVLSGPGASCEAFSEGGIFNITSPMCLVSKQNRFRAAEQQISFICQRVDMDIIVYCNGQKKTILTKTLVMASAFILLQVSFHCYQGLPIAIAIELCVPGFHGWATAALLITFCFGWVLIPACTLAILLVLKFFANILHTSNQENRFKAILRKIKEEFEKTKGSMGCEICKYECETLKELKAHNLSCVQGECPYCFTHCEPTETATQAHYKVCQATHRFREDLKKTVTPKKYWARLYRTLNLFRYKSRCYILTMWTLLLIIESILWAASAAEIPLVPLWTDNAHGVGSVPMHRNTYELDFSFPSSSKYTYKRHLTNPVNDQQSVSLHIEIESQGIGADVHHLGHWYDARLNLKTSFHCYGACTKYQYPWHTAKCHFEKDYEYENSWACNPPDCPGVGTGCTACGLYLDQLKPVATPFRIISVRYSRKVCVQFGEEYLCKTIDMNDCFVTRHAKICIIGTVSKFSQGDTLLFLGPMEGGGIIFKHWCTSTCHFGDPGDVMGPKDKPFICPEFPGQFRKKCNFATTPICEYDGNIISGYKKVLATIDSFQSFNTSNIHFTDERIEWRDPDGMLRDHINIVISKDIDFENLAENPCKVGLQAANIEGAWGSGVGFTLTCQVSLTECPTFLTSIKACDMAICYGAESVTLSRGQNTVRITGKGGHSGSSFKCCHGKECSSTGLQASAPHLDKVNGISELENEKVYDDGAPECGVTCWFKKSGEWVMGIINGNWVVLIVLCVLLLFSLILLSILCPVRKHKKS.

Positions 1–16 (MWSLLLLAALVGQGFA) are cleaved as a signal peptide. The Lumenal segment spans residues 17–484 (LKNVFDMRIQ…PGFHGWATAA (468 aa)). Intrachain disulfides connect Cys-27–Cys-149, Cys-61–Cys-155, Cys-107–Cys-126, Cys-131–Cys-136, Cys-173–Cys-183, Cys-208–Cys-245, Cys-232–Cys-349, Cys-374–Cys-433, Cys-378–Cys-387, and Cys-403–Cys-422. The N-linked (GlcNAc...) asparagine; by host glycan is linked to Asn-132. Asn-233 and Asn-345 each carry an N-linked (GlcNAc...) asparagine; by host glycan. The N-linked (GlcNAc...) asparagine; by host glycan is linked to Asn-397. A helical transmembrane segment spans residues 485-504 (LLITFCFGWVLIPACTLAIL). Residues 505–626 (LVLKFFANIL…NLFRYKSRCY (122 aa)) lie on the Cytoplasmic side of the membrane. Positions 514–531 (LHTSNQENRFKAILRKIK) are binding to the ribonucleoprotein. CCHC-type zinc fingers lie at residues 543–563 (CEICKYECETLKELKAHNLSC) and 568–589 (CPYCFTHCEPTETATQAHYKVC). Binding to the ribonucleoprotein regions lie at residues 586 to 603 (YKVCQATHRFREDLKKTV), 590 to 601 (QATHRFREDLKK), and 609 to 623 (WARLYRTLNLFRYKS). Positions 609–632 (WARLYRTLNLFRYKSRCYILTMWT) constitute an ITAM domain. Residues 613 to 616 (YRTL) carry the YxxL motif. Residues 627-647 (ILTMWTLLLIIESILWAASAA) form a helical membrane-spanning segment. Residues 648 to 1105 (EIPLVPLWTD…WVMGIINGNW (458 aa)) are Lumenal-facing. 8 cysteine pairs are disulfide-bonded: Cys-734–Cys-769, Cys-738–Cys-776, Cys-750–Cys-884, Cys-764–Cys-895, Cys-779–Cys-903, Cys-805–Cys-814, Cys-822–Cys-831, and Cys-862–Cys-866. A fusion loop region spans residues 756 to 776 (YEYENSWACNPPDCPGVGTGC). Asn-927 carries an N-linked (GlcNAc...) asparagine; by host glycan. Intrachain disulfides connect Cys-969-Cys-999, Cys-992-Cys-1044, Cys-1009-Cys-1014, Cys-1045-Cys-1050, and Cys-1084-Cys-1088. The helical transmembrane segment at 1106–1125 (VVLIVLCVLLLFSLILLSIL) threads the bilayer. Residues 1121 to 1134 (LLSILCPVRKHKKS) form a binding to the ribonucleoprotein region. Topologically, residues 1126 to 1134 (CPVRKHKKS) are cytoplasmic.

The protein belongs to the hantavirus envelope glycoprotein family. Homodimer. Homotetramer; forms heterotetrameric Gn-Gc spikes in the pre-fusion conformation. Interacts (via C-terminus) with the nucleoprotein. Interacts with host TUFM; this interaction contributes to the virus-induced degradation of mitochondria by autophagy, which leads to degradation of host MAVS and inhibition of type I interferon (IFN) responses. Interacts with host MAP1LC3B; this interaction contributes to the virus-induced degradation of mitochondria by autophagy, which leads to degradation of host MAVS and inhibition of type I interferon (IFN) responses. In terms of assembly, homodimer. Homotetramer; forms heterotetrameric Gn-Gc spikes in the pre-fusion conformation. Homotrimer; forms homotrimer in the post-fusion conformation at acidic pH. Interacts (via C-terminus) with the nucleoprotein. Envelope polyprotein precursor is quickly cleaved in vivo just after synthesis, presumably by host signal peptidase.

It is found in the virion membrane. Its subcellular location is the host cell surface. The protein localises to the host Golgi apparatus membrane. It localises to the host endoplasmic reticulum membrane. The protein resides in the host mitochondrion. Its function is as follows. Forms homotetramers with glycoprotein C at the surface of the virion. Attaches the virion to host cell receptors including integrin ITGAV/ITGB3. This attachment induces virion internalization predominantly through clathrin-dependent endocytosis. Mediates the assembly and budding of infectious virus particles through its interaction with the nucleocapsid protein and the viral genome. May dysregulate normal immune and endothelial cell responses through an ITAM motif. Translocates to mitochondria, binds to host TUFM and recruits MAP1LC3B. These interactions induce mitochondrial autophagy and therefore destruction of host MAVS leading to inhibition of type I interferon (IFN) responses. Concomitant breakdown of glycoprotein N is apparently prevented by the nucleoprotein that may inhibit Gn-stimulated autophagosome-lysosome fusion. Interacts with the viral genomic RNA. Forms homotetramers with glycoprotein N at the surface of the virion. Attaches the virion to host cell receptors including integrin ITGAV/ITGB3. This attachment induces virion internalization predominantly through clathrin-dependent endocytosis. Class II fusion protein that promotes fusion of viral membrane with host endosomal membrane after endocytosis of the virion. The sequence is that of Envelopment polyprotein (GP) from Homo sapiens (Human).